The chain runs to 94 residues: Acylphosphatase (94 aa).

An Acylphosphatase-like domain is found at 8 to 94 (TVHVIVKGKV…EKRYKHFAQL (87 aa)). Residues Arg-23 and Asn-41 contribute to the active site.

This sequence belongs to the acylphosphatase family.

The enzyme catalyses an acyl phosphate + H2O = a carboxylate + phosphate + H(+). This chain is Acylphosphatase (acyP), found in Bordetella parapertussis (strain 12822 / ATCC BAA-587 / NCTC 13253).